The primary structure comprises 420 residues: Argininosuccinate synthase (420 aa).

Ala23–Ser31 is a binding site for ATP. Residue Tyr102 coordinates L-citrulline. Position 132 (Gly132) interacts with ATP. 3 residues coordinate L-aspartate: Thr134, Asn138, and Asp139. Asn138 lines the L-citrulline pocket. L-citrulline-binding residues include Arg142, Ser190, Glu274, and Tyr286.

This sequence belongs to the argininosuccinate synthase family. Type 1 subfamily. As to quaternary structure, homotetramer.

The protein resides in the cytoplasm. It carries out the reaction L-citrulline + L-aspartate + ATP = 2-(N(omega)-L-arginino)succinate + AMP + diphosphate + H(+). It functions in the pathway amino-acid biosynthesis; L-arginine biosynthesis; L-arginine from L-ornithine and carbamoyl phosphate: step 2/3. In Renibacterium salmoninarum (strain ATCC 33209 / DSM 20767 / JCM 11484 / NBRC 15589 / NCIMB 2235), this protein is Argininosuccinate synthase.